Consider the following 123-residue polypeptide: Small ribosomal subunit protein uS12 (123 aa).

At Asp-89 the chain carries 3-methylthioaspartic acid.

This sequence belongs to the universal ribosomal protein uS12 family. As to quaternary structure, part of the 30S ribosomal subunit. Contacts proteins S8 and S17. May interact with IF1 in the 30S initiation complex.

In terms of biological role, with S4 and S5 plays an important role in translational accuracy. Its function is as follows. Interacts with and stabilizes bases of the 16S rRNA that are involved in tRNA selection in the A site and with the mRNA backbone. Located at the interface of the 30S and 50S subunits, it traverses the body of the 30S subunit contacting proteins on the other side and probably holding the rRNA structure together. The combined cluster of proteins S8, S12 and S17 appears to hold together the shoulder and platform of the 30S subunit. The sequence is that of Small ribosomal subunit protein uS12 from Chelativorans sp. (strain BNC1).